We begin with the raw amino-acid sequence, 139 residues long: Insulin-like growth factor (139 aa).

An N-terminal signal peptide occupies residues 1 to 38 (YIRRVRQGSIYSLLVESQQWCKLTLTLLLLLALLTRCT). The interval 39–67 (LSETLCGSELVDTLQFVCDDRGFFFVPQH) is b. The interval 68 to 82 (VPPRRGAHRRSRARK) is c. The interval 83-103 (GIVEECCFKGCSLRLLEMYCA) is a. A d region spans residues 104-113 (RPSKAERDVA). The segment at 108–139 (AERDVARPRQRPHRASQHSRRGSQSRGRGRSR) is disordered. The tract at residues 114–139 (RPRQRPHRASQHSRRGSQSRGRGRSR) is e. A compositionally biased stretch (basic residues) spans 115–139 (PRQRPHRASQHSRRGSQSRGRGRSR).

The protein belongs to the insulin family.

The protein localises to the secreted. Its function is as follows. The insulin-like growth factors, isolated from plasma, are structurally and functionally related to insulin but have a much higher growth-promoting activity. This is Insulin-like growth factor from Myxine glutinosa (Atlantic hagfish).